The primary structure comprises 492 residues: Glycosyltransferase alg8 (492 aa).

The next 4 membrane-spanning stretches (helical) occupy residues 13–32 (GWLL…PPQV), 47–69 (IGVW…LYVV), 379–401 (LTVA…LLWV), and 421–443 (PAYP…HVFF).

The protein belongs to the glycosyltransferase 2 family.

It localises to the cell membrane. Its pathway is glycan biosynthesis; alginate biosynthesis. In terms of biological role, possibly a processive enzyme that polymerizes GDP-mannuronic acid. The protein is Glycosyltransferase alg8 (alg8) of Azotobacter vinelandii.